The chain runs to 20 residues: Hemocyanin subunit Ia (20 aa).

Positions 1–20 (ADXQPGDSTDKLLAQKQDDV) are disordered.

Belongs to the tyrosinase family. Hemocyanin subfamily. As to quaternary structure, composed of 3 major subunits (IB, II and III) and 1 minor subunit (IA) which form homohexamers and heterohexamers. May also form larger structures. As to expression, hemolymph.

The protein resides in the secreted. The protein localises to the extracellular space. Hemocyanins are copper-containing oxygen carriers occurring freely dissolved in the hemolymph of many mollusks and arthropods. This Panulirus japonicus (Japanese spiny lobster) protein is Hemocyanin subunit Ia.